Reading from the N-terminus, the 244-residue chain is L-xylulose reductase (244 aa).

Met1 carries the post-translational modification N-acetylmethionine. 11–39 (LVTGAGKGIGRSTVLALKAAGAQVVAVSR) contributes to the NADP(+) binding site. Arg21 carries the omega-N-methylarginine modification. Ser136 provides a ligand contact to substrate. Tyr149 serves as the catalytic Proton acceptor. Lys153 is a catalytic residue.

The protein belongs to the short-chain dehydrogenases/reductases (SDR) family. Homotetramer. As to expression, highly expressed in kidney and liver. Expressed in epididymis. Expressed at intermediate level in lung. Weakly expressed in brain, heart, spleen and testis.

The protein resides in the membrane. The enzyme catalyses xylitol + NADP(+) = L-xylulose + NADPH + H(+). Catalyzes the NADPH-dependent reduction of several pentoses, tetroses, trioses, alpha-dicarbonyl compounds and L-xylulose. Participates in the uronate cycle of glucose metabolism. May play a role in the water absorption and cellular osmoregulation in the proximal renal tubules by producing xylitol, an osmolyte, thereby preventing osmolytic stress from occurring in the renal tubules. In Cavia porcellus (Guinea pig), this protein is L-xylulose reductase (DCXR).